The chain runs to 246 residues: Peroxisomal membrane protein 11A (246 aa).

Residues 1-93 (MDAFIRVANQ…LCLTLANLNR (93 aa)) lie on the Cytoplasmic side of the membrane. The helical transmembrane segment at 94–114 (VVYYICDTVLWAKSVGLTSGI) threads the bilayer. The Lumenal segment spans residues 115–217 (NREKWQMRAA…LNQLGIYKSN (103 aa)). A helical transmembrane segment spans residues 218 to 238 (LGVVGFGGLVSSVAGLITVVY). Residues 218-238 (LGVVGFGGLVSSVAGLITVVY) are required for homodimerization, interaction with PEX11G, and peroxisomal localization. The Cytoplasmic portion of the chain corresponds to 239–246 (PQLKLKAR).

Belongs to the peroxin-11 family. As to quaternary structure, homodimer. Heterodimer with PEX11G. Probably interacts with COPB2 and COPA. Interacts with PEX19. Interacts with FIS1. Expressed at high levels in kidney, liver, lung, brain, and testis and at low levels in heart, spleen and skeletal muscle.

The protein localises to the peroxisome membrane. Functionally, may be involved in peroxisomal proliferation and may regulate peroxisomes division. May mediate binding of coatomer proteins to the peroxisomal membrane. Promotes membrane protrusion and elongation on the peroxisomal surface. In Rattus norvegicus (Rat), this protein is Peroxisomal membrane protein 11A (Pex11a).